A 261-amino-acid polypeptide reads, in one-letter code: tRNA pseudouridine synthase A (261 aa).

Catalysis depends on D51, which acts as the Nucleophile. Y109 serves as a coordination point for substrate.

This sequence belongs to the tRNA pseudouridine synthase TruA family. In terms of assembly, homodimer.

It catalyses the reaction uridine(38/39/40) in tRNA = pseudouridine(38/39/40) in tRNA. In terms of biological role, formation of pseudouridine at positions 38, 39 and 40 in the anticodon stem and loop of transfer RNAs. The sequence is that of tRNA pseudouridine synthase A from Shewanella pealeana (strain ATCC 700345 / ANG-SQ1).